Consider the following 769-residue polypeptide: Sensor histidine kinase ComP (769 aa).

The Cytoplasmic segment spans residues 1–9 (MKNLIKKFT). Residues 10 to 33 (IAVIVLSILYISYTTYISMNGIII) traverse the membrane as a helical segment. The Extracellular segment spans residues 34–113 (GTKIHKNDKS…DFDLVTLNRP (80 aa)). Residues 114–134 (YSFFLFVLPLFFYFLSIICIF) traverse the membrane as a helical segment. Over 135–144 (YILKVNKKRR) the chain is Cytoplasmic. The helical transmembrane segment at 145–167 (SFAAYILILLLLDISIAYISAGG) threads the bilayer. Over 168–235 (PFRGHIINRY…QDYLQVDIDF (68 aa)) the chain is Extracellular. Residues 236–257 (LATLNLVSFATLTLFSFSAIYL) form a helical membrane-spanning segment. The Cytoplasmic portion of the chain corresponds to 258 to 272 (HLNKYKYAEHSFILK). The chain crosses the membrane as a helical span at residues 273–295 (LLILTNTLSFAPFLIFFVLPIIF). Residues 296–299 (TGNY) lie on the Extracellular side of the membrane. The chain crosses the membrane as a helical span at residues 300–323 (IFPALASASLLVLIPFGLVYQFVA). Over 324–337 (NKMFDIEFILGRMR) the chain is Cytoplasmic. Residues 338-357 (YYALLAMIPTLLIVGALVLF) form a helical membrane-spanning segment. Topologically, residues 358–361 (DVMD) are extracellular. Residues 362–383 (IQMNPVRQTVFFFVVMFAVFYF) form a helical membrane-spanning segment. Over 384-769 (KEVMDFKFRL…GFKADIEIEL (386 aa)) the chain is Cytoplasmic. The 199-residue stretch at 571 to 769 (LARDLHDSVL…GFKADIEIEL (199 aa)) folds into the Histidine kinase domain. The residue at position 576 (His-576) is a Phosphohistidine; by autocatalysis.

Post-translationally, autophosphorylates on a histidine and transfers the phosphate group onto an aspartate in ComA, thus activating it.

It is found in the cell membrane. The catalysed reaction is ATP + protein L-histidine = ADP + protein N-phospho-L-histidine.. In terms of biological role, sensor in the two-component regulatory system ComP/ComA involved in a major quorum response pathway that regulates the development of genetic competence. Plays a role in sporulation, at least partly interchangeable with that of SpoIIJ. Probably activates ComA by phosphorylation. This is Sensor histidine kinase ComP (comP) from Bacillus subtilis (strain 168).